Reading from the N-terminus, the 118-residue chain is NADH-quinone oxidoreductase subunit A 2 (118 aa).

3 consecutive transmembrane segments (helical) span residues 5–25, 60–80, and 87–107; these read YLPI…SLVF, FYII…LYPW, and LGMF…VGYI.

The protein belongs to the complex I subunit 3 family. As to quaternary structure, NDH-1 is composed of 14 different subunits. Subunits NuoA, H, J, K, L, M, N constitute the membrane sector of the complex.

Its subcellular location is the cell inner membrane. The enzyme catalyses a quinone + NADH + 5 H(+)(in) = a quinol + NAD(+) + 4 H(+)(out). Its function is as follows. NDH-1 shuttles electrons from NADH, via FMN and iron-sulfur (Fe-S) centers, to quinones in the respiratory chain. The immediate electron acceptor for the enzyme in this species is believed to be ubiquinone. Couples the redox reaction to proton translocation (for every two electrons transferred, four hydrogen ions are translocated across the cytoplasmic membrane), and thus conserves the redox energy in a proton gradient. This is NADH-quinone oxidoreductase subunit A 2 from Geobacter metallireducens (strain ATCC 53774 / DSM 7210 / GS-15).